We begin with the raw amino-acid sequence, 189 residues long: Potassium-transporting ATPase KdpC subunit (189 aa).

Residues 10-30 (LTLVFCVFFSVCYILVLWIFA) traverse the membrane as a helical segment.

The protein belongs to the KdpC family. The system is composed of three essential subunits: KdpA, KdpB and KdpC.

It localises to the cell inner membrane. Its function is as follows. Part of the high-affinity ATP-driven potassium transport (or Kdp) system, which catalyzes the hydrolysis of ATP coupled with the electrogenic transport of potassium into the cytoplasm. This subunit acts as a catalytic chaperone that increases the ATP-binding affinity of the ATP-hydrolyzing subunit KdpB by the formation of a transient KdpB/KdpC/ATP ternary complex. The sequence is that of Potassium-transporting ATPase KdpC subunit from Phocaeicola vulgatus (strain ATCC 8482 / DSM 1447 / JCM 5826 / CCUG 4940 / NBRC 14291 / NCTC 11154) (Bacteroides vulgatus).